Consider the following 317-residue polypeptide: Small ribosomal subunit protein uS2 (317 aa).

Disordered stretches follow at residues 1–30 (MENENLKVEQATTAENNMAEKADDSKASKE) and 293–317 (RSFEQNSAEGVKTVEKTTTSTEVAE). The segment covering 18–30 (MAEKADDSKASKE) has biased composition (basic and acidic residues). The segment covering 308 to 317 (KTTTSTEVAE) has biased composition (low complexity).

Belongs to the universal ribosomal protein uS2 family.

The polypeptide is Small ribosomal subunit protein uS2 (Mycoplasmopsis agalactiae (strain NCTC 10123 / CIP 59.7 / PG2) (Mycoplasma agalactiae)).